Consider the following 382-residue polypeptide: Farnesyl diphosphate synthase (382 aa).

Isopentenyl diphosphate is bound by residues K81, R84, and Q120. Residues D127 and D131 each coordinate Mg(2+). R136 contributes to the dimethylallyl diphosphate binding site. R137 provides a ligand contact to isopentenyl diphosphate. K230, T231, Q270, K287, and K296 together coordinate dimethylallyl diphosphate.

It belongs to the FPP/GGPP synthase family. Mg(2+) serves as cofactor.

It localises to the cytoplasm. It catalyses the reaction isopentenyl diphosphate + dimethylallyl diphosphate = (2E)-geranyl diphosphate + diphosphate. The catalysed reaction is isopentenyl diphosphate + (2E)-geranyl diphosphate = (2E,6E)-farnesyl diphosphate + diphosphate. Its pathway is isoprenoid biosynthesis; farnesyl diphosphate biosynthesis; farnesyl diphosphate from geranyl diphosphate and isopentenyl diphosphate: step 1/1. The protein operates within isoprenoid biosynthesis; geranyl diphosphate biosynthesis; geranyl diphosphate from dimethylallyl diphosphate and isopentenyl diphosphate: step 1/1. With respect to regulation, inhibited by aminobisphosphonate drugs (aBP), such as risedronate and alendronate. In terms of biological role, key enzyme in isoprenoid biosynthesis which catalyzes the formation of farnesyl diphosphate (FPP), a sterol precursor. Involved in the inhibition of cell growth. This Dictyostelium discoideum (Social amoeba) protein is Farnesyl diphosphate synthase (fps).